The following is an 88-amino-acid chain: Large ribosomal subunit protein bL27 (88 aa).

The disordered stretch occupies residues 1–25 (MAHKKGASSSRNGRDSNAQRLGVKR). Over residues 7 to 19 (ASSSRNGRDSNAQ) the composition is skewed to polar residues.

It belongs to the bacterial ribosomal protein bL27 family.

This is Large ribosomal subunit protein bL27 from Nocardia farcinica (strain IFM 10152).